Here is a 362-residue protein sequence, read N- to C-terminus: MTYVLDLKRSFLDACTWLIGDNFRDLGSVLWVPLPILSLVIVATLGVLVIVWLERKISAGVQQRVGPEYGGALGLLQPLADGLKLVFKEDVVPAKSDTWLFTLGPAVVVIPIFLAYLVVPFGQQLIIADLRIGIFFWIAISSIAPIGLLMSGYGSNNKYSFLGGLRAAAQSISYELPLAICVLSVCLLADSLSTVDIVESQSSWGILTWNIWRQPIGFVAFLIAALAECERLPFDLPEAEEELVAGYQTEYTGMKFGLFYVGSYVNLLVSGCFVTVLYLGGWHGPFAIDGILPDSPPFQVLDAFLGITWTLLKTFLFLFAAILTRWTLPRVRIDQLLDLGWKFLLPVSLGNLLLTASLKLLF.

8 consecutive transmembrane segments (helical) span residues 31-51 (WVPLPILSLVIVATLGVLVIV), 99-119 (WLFTLGPAVVVIPIFLAYLVV), 132-152 (IGIFFWIAISSIAPIGLLMSG), 178-198 (LAICVLSVCLLADSLSTVDIV), 206-226 (ILTWNIWRQPIGFVAFLIAAL), 268-288 (LVSGCFVTVLYLGGWHGPFAI), 303-323 (AFLGITWTLLKTFLFLFAAIL), and 336-356 (LLDLGWKFLLPVSLGNLLLTA).

The protein belongs to the complex I subunit 1 family. NDH is composed of at least 16 different subunits, 5 of which are encoded in the nucleus.

The protein resides in the plastid. It localises to the chloroplast thylakoid membrane. The catalysed reaction is a plastoquinone + NADH + (n+1) H(+)(in) = a plastoquinol + NAD(+) + n H(+)(out). It carries out the reaction a plastoquinone + NADPH + (n+1) H(+)(in) = a plastoquinol + NADP(+) + n H(+)(out). NDH shuttles electrons from NAD(P)H:plastoquinone, via FMN and iron-sulfur (Fe-S) centers, to quinones in the photosynthetic chain and possibly in a chloroplast respiratory chain. The immediate electron acceptor for the enzyme in this species is believed to be plastoquinone. Couples the redox reaction to proton translocation, and thus conserves the redox energy in a proton gradient. The polypeptide is NAD(P)H-quinone oxidoreductase subunit 1, chloroplastic (Nephroselmis olivacea (Green alga)).